Consider the following 332-residue polypeptide: Methionyl-tRNA formyltransferase (332 aa).

124–127 contacts (6S)-5,6,7,8-tetrahydrofolate; it reads SLLP.

This sequence belongs to the Fmt family.

It catalyses the reaction L-methionyl-tRNA(fMet) + (6R)-10-formyltetrahydrofolate = N-formyl-L-methionyl-tRNA(fMet) + (6S)-5,6,7,8-tetrahydrofolate + H(+). Its function is as follows. Attaches a formyl group to the free amino group of methionyl-tRNA(fMet). The formyl group appears to play a dual role in the initiator identity of N-formylmethionyl-tRNA by promoting its recognition by IF2 and preventing the misappropriation of this tRNA by the elongation apparatus. In Polynucleobacter necessarius subsp. necessarius (strain STIR1), this protein is Methionyl-tRNA formyltransferase.